The sequence spans 99 residues: Large ribosomal subunit protein uL23 (99 aa).

It belongs to the universal ribosomal protein uL23 family. In terms of assembly, part of the 50S ribosomal subunit. Contacts protein L29, and trigger factor when it is bound to the ribosome.

Its function is as follows. One of the early assembly proteins it binds 23S rRNA. One of the proteins that surrounds the polypeptide exit tunnel on the outside of the ribosome. Forms the main docking site for trigger factor binding to the ribosome. This is Large ribosomal subunit protein uL23 from Francisella tularensis subsp. tularensis (strain SCHU S4 / Schu 4).